The sequence spans 469 residues: Nuclear hormone receptor family member nhr-154 (469 aa).

The segment at residues 80-159 is a DNA-binding region (nuclear receptor); it reads PSKCLVCRNP…VGMNPMAIQA (80 aa). 2 consecutive NR C4-type zinc fingers follow at residues 83-103 and 119-142; these read CLVC…CNGC and CAKQ…CRAC. Residues 230–459 enclose the NR LBD domain; the sequence is LDSKPVLVVT…KMGTTFRKCI (230 aa).

This sequence belongs to the nuclear hormone receptor family.

The protein resides in the nucleus. Its function is as follows. Orphan nuclear receptor. This is Nuclear hormone receptor family member nhr-154 (nhr-154) from Caenorhabditis elegans.